A 1235-amino-acid polypeptide reads, in one-letter code: Ubiquitin carboxyl-terminal hydrolase 40 (1235 aa).

A USP domain is found at 41-482; the sequence is SGIRNQGGTC…SAYMLFYRKS (442 aa). Cys50 acts as the Nucleophile in catalysis. Residue His305 is the Proton acceptor of the active site. A compositionally biased stretch (basic and acidic residues) spans 1180–1190; it reads IRDDTGKEKQK. The segment at 1180 to 1235 is disordered; the sequence is IRDDTGKEKQKQRALGRRKSQEALHEQSSYILSSAETPARPRAPETSLSIHVGSFR. The span at 1205-1215 shows a compositional bias: polar residues; the sequence is EQSSYILSSAE.

It belongs to the peptidase C19 family. In terms of tissue distribution, broadly expressed.

It carries out the reaction Thiol-dependent hydrolysis of ester, thioester, amide, peptide and isopeptide bonds formed by the C-terminal Gly of ubiquitin (a 76-residue protein attached to proteins as an intracellular targeting signal).. May be catalytically inactive. This Homo sapiens (Human) protein is Ubiquitin carboxyl-terminal hydrolase 40 (USP40).